A 205-amino-acid chain; its full sequence is Probable GTP-binding protein EngB (205 aa).

Positions 21–196 constitute an EngB-type G domain; the sequence is QVPEVAFAGR…VHEVSKCVKE (176 aa). Residues 29–36, 56–60, 74–77, 141–144, and 172–177 each bind GTP; these read GRSNVGKS, GSTRQ, DLPG, TKID, and IIGTSS. Positions 36 and 58 each coordinate Mg(2+).

It belongs to the TRAFAC class TrmE-Era-EngA-EngB-Septin-like GTPase superfamily. EngB GTPase family. The cofactor is Mg(2+).

In terms of biological role, necessary for normal cell division and for the maintenance of normal septation. This is Probable GTP-binding protein EngB from Anaplasma marginale (strain Florida).